We begin with the raw amino-acid sequence, 195 residues long: Phenoloxidase subunit 1 (195 aa).

Cu cation is bound at residue His10. Residues Asn77, Asn97, and Asn98 are each glycosylated (N-linked (GlcNAc...) asparagine).

It belongs to the tyrosinase family. As to quaternary structure, heterodimer. Cu(2+) is required as a cofactor.

Its subcellular location is the secreted. It carries out the reaction 2 L-dopa + O2 = 2 L-dopaquinone + 2 H2O. The catalysed reaction is L-tyrosine + O2 = L-dopaquinone + H2O. Functionally, this is a copper-containing oxidase that functions in the formation of pigments such as melanins and other polyphenolic compounds. Catalyzes the rate-limiting conversions of tyrosine to DOPA, DOPA to DOPA-quinone and possibly 5,6 dihydroxyindole to indole-5'6 quinone. The polypeptide is Phenoloxidase subunit 1 (Simulium damnosum (Black fly)).